We begin with the raw amino-acid sequence, 446 residues long: Tubulin beta-1 chain (446 aa).

GTP is bound by residues Gln-13, Glu-71, Ser-140, Gly-144, Thr-145, Gly-146, Asn-206, and Asn-228. Glu-71 is a Mg(2+) binding site. Positions 421 to 446 (VSEYQQYQDASADDGEEYEEDAPMEE) are disordered. The span at 431–446 (SADDGEEYEEDAPMEE) shows a compositional bias: acidic residues.

Belongs to the tubulin family. As to quaternary structure, dimer of alpha and beta chains. A typical microtubule is a hollow water-filled tube with an outer diameter of 25 nm and an inner diameter of 15 nM. Alpha-beta heterodimers associate head-to-tail to form protofilaments running lengthwise along the microtubule wall with the beta-tubulin subunit facing the microtubule plus end conferring a structural polarity. Microtubules usually have 13 protofilaments but different protofilament numbers can be found in some organisms and specialized cells. Mg(2+) is required as a cofactor.

The protein localises to the cytoplasm. It localises to the cytoskeleton. In terms of biological role, tubulin is the major constituent of microtubules, a cylinder consisting of laterally associated linear protofilaments composed of alpha- and beta-tubulin heterodimers. Microtubules grow by the addition of GTP-tubulin dimers to the microtubule end, where a stabilizing cap forms. Below the cap, tubulin dimers are in GDP-bound state, owing to GTPase activity of alpha-tubulin. The chain is Tubulin beta-1 chain (tub1) from Hypocrea rufa (Trichoderma viride).